The sequence spans 85 residues: Phosphocarrier protein HPr (85 aa).

Residues 1–85 enclose the HPr domain; it reads MFQQEVTITA…HLVKLMAELE (85 aa). H15 acts as the Pros-phosphohistidine intermediate in catalysis.

The protein belongs to the HPr family.

The protein localises to the cytoplasm. In terms of biological role, general (non sugar-specific) component of the phosphoenolpyruvate-dependent sugar phosphotransferase system (sugar PTS). This major carbohydrate active-transport system catalyzes the phosphorylation of incoming sugar substrates concomitantly with their translocation across the cell membrane. The phosphoryl group from phosphoenolpyruvate (PEP) is transferred to the phosphoryl carrier protein HPr by enzyme I. Phospho-HPr then transfers it to the PTS EIIA domain. This chain is Phosphocarrier protein HPr (ptsH), found in Escherichia coli O157:H7.